Reading from the N-terminus, the 475-residue chain is Aspartyl/glutamyl-tRNA(Asn/Gln) amidotransferase subunit B (475 aa).

Belongs to the GatB/GatE family. GatB subfamily. As to quaternary structure, heterotrimer of A, B and C subunits.

It catalyses the reaction L-glutamyl-tRNA(Gln) + L-glutamine + ATP + H2O = L-glutaminyl-tRNA(Gln) + L-glutamate + ADP + phosphate + H(+). It carries out the reaction L-aspartyl-tRNA(Asn) + L-glutamine + ATP + H2O = L-asparaginyl-tRNA(Asn) + L-glutamate + ADP + phosphate + 2 H(+). Its function is as follows. Allows the formation of correctly charged Asn-tRNA(Asn) or Gln-tRNA(Gln) through the transamidation of misacylated Asp-tRNA(Asn) or Glu-tRNA(Gln) in organisms which lack either or both of asparaginyl-tRNA or glutaminyl-tRNA synthetases. The reaction takes place in the presence of glutamine and ATP through an activated phospho-Asp-tRNA(Asn) or phospho-Glu-tRNA(Gln). This is Aspartyl/glutamyl-tRNA(Asn/Gln) amidotransferase subunit B from Thermodesulfovibrio yellowstonii (strain ATCC 51303 / DSM 11347 / YP87).